The sequence spans 184 residues: Photosystem I assembly protein Ycf4 (184 aa).

2 helical membrane-spanning segments follow: residues 22-42 (FGWACILFLGSLGFLVVGASS) and 57-77 (IVFFPQGIVMSFYGIAGLFIS).

Belongs to the Ycf4 family.

It localises to the plastid. The protein resides in the chloroplast thylakoid membrane. In terms of biological role, seems to be required for the assembly of the photosystem I complex. This chain is Photosystem I assembly protein Ycf4, found in Acorus calamus (Sweet flag).